A 337-amino-acid chain; its full sequence is tRNA-cytidine(32) 2-sulfurtransferase (337 aa).

Residues 71 to 76 (SGGKDS) carry the PP-loop motif motif. [4Fe-4S] cluster-binding residues include Cys-146, Cys-149, and Cys-237.

The protein belongs to the TtcA family. In terms of assembly, homodimer. Mg(2+) is required as a cofactor. The cofactor is [4Fe-4S] cluster.

It is found in the cytoplasm. The enzyme catalyses cytidine(32) in tRNA + S-sulfanyl-L-cysteinyl-[cysteine desulfurase] + AH2 + ATP = 2-thiocytidine(32) in tRNA + L-cysteinyl-[cysteine desulfurase] + A + AMP + diphosphate + H(+). The protein operates within tRNA modification. Functionally, catalyzes the ATP-dependent 2-thiolation of cytidine in position 32 of tRNA, to form 2-thiocytidine (s(2)C32). The sulfur atoms are provided by the cysteine/cysteine desulfurase (IscS) system. The chain is tRNA-cytidine(32) 2-sulfurtransferase from Burkholderia vietnamiensis (strain G4 / LMG 22486) (Burkholderia cepacia (strain R1808)).